A 511-amino-acid chain; its full sequence is Bifunctional purine biosynthesis protein PurH (511 aa).

The 145-residue stretch at 1-145 folds into the MGS-like domain; the sequence is MKKRALVSVS…KNHKFVSVIV (145 aa).

This sequence belongs to the PurH family.

It catalyses the reaction (6R)-10-formyltetrahydrofolate + 5-amino-1-(5-phospho-beta-D-ribosyl)imidazole-4-carboxamide = 5-formamido-1-(5-phospho-D-ribosyl)imidazole-4-carboxamide + (6S)-5,6,7,8-tetrahydrofolate. The catalysed reaction is IMP + H2O = 5-formamido-1-(5-phospho-D-ribosyl)imidazole-4-carboxamide. It participates in purine metabolism; IMP biosynthesis via de novo pathway; 5-formamido-1-(5-phospho-D-ribosyl)imidazole-4-carboxamide from 5-amino-1-(5-phospho-D-ribosyl)imidazole-4-carboxamide (10-formyl THF route): step 1/1. Its pathway is purine metabolism; IMP biosynthesis via de novo pathway; IMP from 5-formamido-1-(5-phospho-D-ribosyl)imidazole-4-carboxamide: step 1/1. The protein is Bifunctional purine biosynthesis protein PurH of Bacillus anthracis (strain A0248).